Here is a 389-residue protein sequence, read N- to C-terminus: Formate-dependent phosphoribosylglycinamide formyltransferase (389 aa).

N(1)-(5-phospho-beta-D-ribosyl)glycinamide contacts are provided by residues glutamate 21–leucine 22 and glutamate 81. ATP contacts are provided by residues arginine 113, lysine 154, serine 159 to glutamine 164, glutamate 194 to isoleucine 197, and glutamate 202. Residues arginine 118–leucine 307 form the ATP-grasp domain. Mg(2+)-binding residues include glutamate 266 and glutamate 278. N(1)-(5-phospho-beta-D-ribosyl)glycinamide-binding positions include aspartate 285, lysine 353, and arginine 360–arginine 361.

The protein belongs to the PurK/PurT family. In terms of assembly, homodimer.

It carries out the reaction N(1)-(5-phospho-beta-D-ribosyl)glycinamide + formate + ATP = N(2)-formyl-N(1)-(5-phospho-beta-D-ribosyl)glycinamide + ADP + phosphate + H(+). The protein operates within purine metabolism; IMP biosynthesis via de novo pathway; N(2)-formyl-N(1)-(5-phospho-D-ribosyl)glycinamide from N(1)-(5-phospho-D-ribosyl)glycinamide (formate route): step 1/1. Its function is as follows. Involved in the de novo purine biosynthesis. Catalyzes the transfer of formate to 5-phospho-ribosyl-glycinamide (GAR), producing 5-phospho-ribosyl-N-formylglycinamide (FGAR). Formate is provided by PurU via hydrolysis of 10-formyl-tetrahydrofolate. This Methanocaldococcus jannaschii (strain ATCC 43067 / DSM 2661 / JAL-1 / JCM 10045 / NBRC 100440) (Methanococcus jannaschii) protein is Formate-dependent phosphoribosylglycinamide formyltransferase.